The chain runs to 296 residues: Cytidine deaminase (296 aa).

CMP/dCMP-type deaminase domains lie at 47–167 (TEAE…FGPK) and 186–296 (DSAD…IDPV). A substrate-binding site is contributed by 88-90 (NLE). Residue histidine 101 participates in Zn(2+) binding. Catalysis depends on glutamate 103, which acts as the Proton donor. 2 residues coordinate Zn(2+): cysteine 128 and cysteine 131.

The protein belongs to the cytidine and deoxycytidylate deaminase family. In terms of assembly, homodimer. Zn(2+) is required as a cofactor.

The catalysed reaction is cytidine + H2O + H(+) = uridine + NH4(+). It catalyses the reaction 2'-deoxycytidine + H2O + H(+) = 2'-deoxyuridine + NH4(+). This enzyme scavenges exogenous and endogenous cytidine and 2'-deoxycytidine for UMP synthesis. This is Cytidine deaminase from Shewanella baltica (strain OS155 / ATCC BAA-1091).